The sequence spans 181 residues: Probable toxin TacT (181 aa).

It belongs to the acetyltransferase family. Forms a complex with cognate antitoxin TacA.

Functionally, probable toxin component of a type II toxin-antitoxin (TA) system. Might acetylate tRNA and inhibit translation. Should be neutralized by cognate antitoxin TacA (y4aR). This chain is Probable toxin TacT, found in Sinorhizobium fredii (strain NBRC 101917 / NGR234).